Here is a 337-residue protein sequence, read N- to C-terminus: GTP 3',8-cyclase (337 aa).

The Radical SAM core domain maps to 1–226 (MNRVDYLRIS…REKIRQKWGL (226 aa)). Position 8 (Arg-8) interacts with GTP. 2 residues coordinate [4Fe-4S] cluster: Cys-15 and Cys-19. Tyr-21 lines the S-adenosyl-L-methionine pocket. Cys-22 is a binding site for [4Fe-4S] cluster. Arg-60 contributes to the GTP binding site. Gly-64 contacts S-adenosyl-L-methionine. Thr-91 contributes to the GTP binding site. Position 115 (Ser-115) interacts with S-adenosyl-L-methionine. Lys-155 lines the GTP pocket. Met-189 is an S-adenosyl-L-methionine binding site. The [4Fe-4S] cluster site is built by Cys-260 and Cys-263. 265–267 (RMR) is a GTP binding site. Cys-277 lines the [4Fe-4S] cluster pocket.

This sequence belongs to the radical SAM superfamily. MoaA family. As to quaternary structure, monomer and homodimer. The cofactor is [4Fe-4S] cluster.

The enzyme catalyses GTP + AH2 + S-adenosyl-L-methionine = (8S)-3',8-cyclo-7,8-dihydroguanosine 5'-triphosphate + 5'-deoxyadenosine + L-methionine + A + H(+). Its pathway is cofactor biosynthesis; molybdopterin biosynthesis. Catalyzes the cyclization of GTP to (8S)-3',8-cyclo-7,8-dihydroguanosine 5'-triphosphate. The sequence is that of GTP 3',8-cyclase from Crocosphaera subtropica (strain ATCC 51142 / BH68) (Cyanothece sp. (strain ATCC 51142)).